The chain runs to 291 residues: Ribosomal RNA small subunit methyltransferase H (291 aa).

S-adenosyl-L-methionine contacts are provided by residues 36 to 38 (GGH), Asp55, Leu88, Asp102, and Gln109. A disordered region spans residues 268 to 291 (KPTQEETKNNPRARSAKLRVAERI).

Belongs to the methyltransferase superfamily. RsmH family.

It is found in the cytoplasm. It carries out the reaction cytidine(1402) in 16S rRNA + S-adenosyl-L-methionine = N(4)-methylcytidine(1402) in 16S rRNA + S-adenosyl-L-homocysteine + H(+). Its function is as follows. Specifically methylates the N4 position of cytidine in position 1402 (C1402) of 16S rRNA. This is Ribosomal RNA small subunit methyltransferase H from Thermosipho melanesiensis (strain DSM 12029 / CIP 104789 / BI429).